The chain runs to 97 residues: Small ribosomal subunit protein bS16c (97 aa).

This sequence belongs to the bacterial ribosomal protein bS16 family.

It localises to the plastid. The protein localises to the chloroplast. In Piper cenocladum (Ant piper), this protein is Small ribosomal subunit protein bS16c.